We begin with the raw amino-acid sequence, 336 residues long: tRNA N6-adenosine threonylcarbamoyltransferase (336 aa).

Fe cation contacts are provided by histidine 110 and histidine 114. Substrate is bound by residues leucine 133–lysine 137, aspartate 166, glycine 179, and asparagine 271. Aspartate 300 provides a ligand contact to Fe cation.

It belongs to the KAE1 / TsaD family. Fe(2+) is required as a cofactor.

It is found in the cytoplasm. The catalysed reaction is L-threonylcarbamoyladenylate + adenosine(37) in tRNA = N(6)-L-threonylcarbamoyladenosine(37) in tRNA + AMP + H(+). Functionally, required for the formation of a threonylcarbamoyl group on adenosine at position 37 (t(6)A37) in tRNAs that read codons beginning with adenine. Is involved in the transfer of the threonylcarbamoyl moiety of threonylcarbamoyl-AMP (TC-AMP) to the N6 group of A37, together with TsaE and TsaB. TsaD likely plays a direct catalytic role in this reaction. This is tRNA N6-adenosine threonylcarbamoyltransferase from Buchnera aphidicola subsp. Acyrthosiphon pisum (strain 5A).